A 2259-amino-acid polypeptide reads, in one-letter code: Putative Polycomb group protein ASXL3 (2259 aa).

Residues 10–83 (RTWAEAARLA…KSGLYALRKE (74 aa)) enclose the HTH HARE-type domain. The interval 181–230 (VVLTPLKVSDEQSDSPSGSESKNGEADSSDKEMKHGQKSPTGKQTSQHLK) is disordered. Residues 202 to 215 (KNGEADSSDKEMKH) show a composition bias toward basic and acidic residues. A compositionally biased stretch (polar residues) spans 218–227 (KSPTGKQTSQ). The region spanning 253 to 362 (PGSILVNTNL…FERFYGERSG (110 aa)) is the DEUBAD domain. Disordered regions lie at residues 364 to 399 (SREE…AQNA), 607 to 643 (CISE…CTPA), 703 to 810 (EASP…IPEP), 857 to 1012 (SEMT…PLKI), 1025 to 1049 (SQPV…NTGA), 1126 to 1150 (RLPS…TKME), 1433 to 1462 (LSGE…GGFV), 1614 to 1643 (DPMR…GLKA), 1687 to 1719 (DFPG…TTSP), and 1993 to 2075 (NMLS…TTKR). Polar residues-rich tracts occupy residues 607 to 617 (CISETSFSSES), 630 to 643 (GETQ…CTPA), and 703 to 717 (EASP…SEAS). A compositionally biased stretch (low complexity) spans 722 to 741 (LPPTSETSSESSMPLTSETP). 2 stretches are compositionally biased toward polar residues: residues 770–781 (KSPSGSEEANSP) and 926–945 (QSST…SEPS). Basic and acidic residues-rich tracts occupy residues 949 to 985 (DGIR…DDQS) and 995 to 1006 (PEKEQPPREEPR). Positions 1034 to 1043 (RASTSTSVSS) are enriched in low complexity. Residues 1437 to 1448 (NLDNNSGPLNRT) show a composition bias toward polar residues. Over residues 1699-1719 (EVTSSASVQPTQTMKPSTTSP) the composition is skewed to polar residues. A compositionally biased stretch (pro residues) spans 2023–2055 (PLPPPPPPPPPPPPPLALPPPPPPPPPLPPPLP). The PHD-type; atypical zinc finger occupies 2221-2258 (ELKCSCRLKAMIVCKGCGAFCHDDCIGPSKLCVACLVV).

It belongs to the Asx family. Core component of the polycomb repressive deubiquitinase (PR-DUB) complex, at least composed of BAP1, one of ASXL1, ASXL2 or (probably) ASXL3, and one of MBD5 or MBD6. Distinct combinations of ASXL and MBD proteins may preferentially bind specific histone modification marks. The PR-DUB core associates with a number of accessory proteins, including FOXK1, FOXK2, KDM1B, HCFC1 and OGT; KDM1B specifically associates with ASXL2 PR-DUB complexes. Interacts (via PHD domain) with MBD5 and MBD6 (via MBD domain); the interaction is probably direct and mediates association of MBD proteins with the PR-DUB core.

The protein localises to the nucleus. In terms of biological role, putative Polycomb group (PcG) protein. PcG proteins act by forming multiprotein complexes, which are required to maintain the transcriptionally repressive state of homeotic genes throughout development. PcG proteins are not required to initiate repression, but to maintain it during later stages of development. They probably act via methylation of histones, rendering chromatin heritably changed in its expressibility. Non-catalytic component of the PR-DUB complex, a complex that specifically mediates deubiquitination of histone H2A monoubiquitinated at 'Lys-119' (H2AK119ub1). The PR-DUB complex is an epigenetic regulator of gene expression and acts as a transcriptional coactivator, affecting genes involved in development, cell communication, signaling, cell proliferation and cell viability. ASXL1, ASXL2 and ASXL3 function redundantly in the PR-DUB complex and are essential for chromatin recruitment and transcriptional activation of associated genes. In Mus musculus (Mouse), this protein is Putative Polycomb group protein ASXL3 (Asxl3).